The primary structure comprises 61 residues: Putative MSV199 domain-containing protein 200R (61 aa).

The polypeptide is Putative MSV199 domain-containing protein 200R (Invertebrate iridescent virus 6 (IIV-6)).